The sequence spans 1202 residues: Calmodulin-binding transcription activator 2 (1202 aa).

The segment at residues 30–155 (RCPLLPPERL…YLNVPALEDC (126 aa)) is a DNA-binding region (CG-1). The short motif at 79–86 (RKKVKYRK) is the Nuclear localization signal element. Disordered regions lie at residues 263-322 (SIPH…SRGG), 361-409 (GTEP…AHTP), and 421-491 (PQAA…LFGG). The segment covering 270 to 283 (PEPPPLIAPLPPEL) has biased composition (pro residues). 2 stretches are compositionally biased toward low complexity: residues 289–299 (SPSSSSSSSSS) and 313–322 (TSRGGSSRGG). 2 stretches are compositionally biased toward pro residues: residues 365 to 374 (SAPPAPPSPA) and 460 to 476 (PPIP…PAPL). One can recognise an IPT/TIG domain in the interval 537 to 615 (DFSPEWSYPE…LSASVLFEYR (79 aa)). ANK repeat units follow at residues 712–745 (MSLL…DLEQ), 757–787 (CTPL…SIPD), and 791–821 (RLPL…SVEP). 2 disordered regions span residues 817–874 (PSVE…ASEM) and 906–929 (PLSS…ADSP). Low complexity-rich tracts occupy residues 826–846 (SPPS…SELS) and 906–917 (PLSSLPALPPAS). IQ domains follow at residues 1049 to 1078 (YEAA…AAVI) and 1102 to 1131 (TQAA…AVLI).

Belongs to the CAMTA family. May interact with calmodulin. Detected in brain. Expressed at constant levels throughout the cell cycle in neuroblastoma cell lines.

Its subcellular location is the nucleus. Transcription activator. May act as tumor suppressor. This Homo sapiens (Human) protein is Calmodulin-binding transcription activator 2 (CAMTA2).